The following is a 182-amino-acid chain: MMNQDSLALIKQSIKTIPDYPIPGIMFRDVTSLLENAEAYKATIAILVAHYQSKGFTKVVGTEARGFLFGAPLALELGVGFVPVRKPGKLPRKTISQTYDLEYGKDTLEIHVDAINANDKVLVIDDLLATGGTIEATVKLIRELGGEVSHAAFVISLPEIGGEKRLQGMGIEVLSLCEFDGE.

The protein belongs to the purine/pyrimidine phosphoribosyltransferase family. As to quaternary structure, homodimer.

The protein resides in the cytoplasm. It carries out the reaction AMP + diphosphate = 5-phospho-alpha-D-ribose 1-diphosphate + adenine. It functions in the pathway purine metabolism; AMP biosynthesis via salvage pathway; AMP from adenine: step 1/1. In terms of biological role, catalyzes a salvage reaction resulting in the formation of AMP, that is energically less costly than de novo synthesis. The polypeptide is Adenine phosphoribosyltransferase (Shewanella frigidimarina (strain NCIMB 400)).